Here is a 197-residue protein sequence, read N- to C-terminus: MYEYIKGKYIDMYKDYIVIENNNIGYKIYTSGSTMAKLPSIGENIMLYTEQIVREDFIGVYGFLTKDELSMFKLLLTINGVGAKAALSLLSISNVSTLKYAIKMGDEKTITRAPGIGKKTAQRIILELKDKIEIDILEEDDEQIINKVADDKKVLEAVAALVTLGYSEKEANKVINSCDKNNSLEQIIKEALKYLMK.

The domain I stretch occupies residues 1–64 (MYEYIKGKYI…EDFIGVYGFL (64 aa)). The domain II stretch occupies residues 65-144 (TKDELSMFKL…DILEEDDEQI (80 aa)). The segment at 145-149 (INKVA) is flexible linker. The interval 149 to 197 (ADDKKVLEAVAALVTLGYSEKEANKVINSCDKNNSLEQIIKEALKYLMK) is domain III.

This sequence belongs to the RuvA family. In terms of assembly, homotetramer. Forms an RuvA(8)-RuvB(12)-Holliday junction (HJ) complex. HJ DNA is sandwiched between 2 RuvA tetramers; dsDNA enters through RuvA and exits via RuvB. An RuvB hexamer assembles on each DNA strand where it exits the tetramer. Each RuvB hexamer is contacted by two RuvA subunits (via domain III) on 2 adjacent RuvB subunits; this complex drives branch migration. In the full resolvosome a probable DNA-RuvA(4)-RuvB(12)-RuvC(2) complex forms which resolves the HJ.

The protein resides in the cytoplasm. Its function is as follows. The RuvA-RuvB-RuvC complex processes Holliday junction (HJ) DNA during genetic recombination and DNA repair, while the RuvA-RuvB complex plays an important role in the rescue of blocked DNA replication forks via replication fork reversal (RFR). RuvA specifically binds to HJ cruciform DNA, conferring on it an open structure. The RuvB hexamer acts as an ATP-dependent pump, pulling dsDNA into and through the RuvAB complex. HJ branch migration allows RuvC to scan DNA until it finds its consensus sequence, where it cleaves and resolves the cruciform DNA. The protein is Holliday junction branch migration complex subunit RuvA of Clostridium botulinum (strain ATCC 19397 / Type A).